Reading from the N-terminus, the 373-residue chain is Chaperone protein DnaJ (373 aa).

One can recognise a J domain in the interval 4–68 (NYYQILGVSK…QKRAAYDRLG (65 aa)). The CR-type zinc finger occupies 136-214 (GIEKNINFSS…CHGMGRYHKQ (79 aa)). Residues Cys-149, Cys-152, Cys-166, Cys-169, Cys-188, Cys-191, Cys-202, and Cys-205 each contribute to the Zn(2+) site. CXXCXGXG motif repeat units follow at residues 149 to 156 (CNTCHGSG), 166 to 173 (CDACSGVG), 188 to 195 (CHKCQGNG), and 202 to 209 (CKKCHGMG).

This sequence belongs to the DnaJ family. In terms of assembly, homodimer. The cofactor is Zn(2+).

It localises to the cytoplasm. In terms of biological role, participates actively in the response to hyperosmotic and heat shock by preventing the aggregation of stress-denatured proteins and by disaggregating proteins, also in an autonomous, DnaK-independent fashion. Unfolded proteins bind initially to DnaJ; upon interaction with the DnaJ-bound protein, DnaK hydrolyzes its bound ATP, resulting in the formation of a stable complex. GrpE releases ADP from DnaK; ATP binding to DnaK triggers the release of the substrate protein, thus completing the reaction cycle. Several rounds of ATP-dependent interactions between DnaJ, DnaK and GrpE are required for fully efficient folding. Also involved, together with DnaK and GrpE, in the DNA replication of plasmids through activation of initiation proteins. The polypeptide is Chaperone protein DnaJ (Rickettsia rickettsii (strain Sheila Smith)).